The primary structure comprises 81 residues: Centromere protein X (81 aa).

N-acetylmethionine is present on M1.

It belongs to the CENP-X/MHF2 family. In terms of assembly, heterodimer with CENPX, sometimes called MHF; this interaction stabilizes both partners. MHF heterodimers can assemble to form tetrameric structures. MHF also coassemble with CENPT-CENPW heterodimers at centromeres to form the tetrameric CENP-T-W-S-X complex. Forms a discrete complex with FANCM and CENPX, called FANCM-MHF; this interaction, probably mediated by direct binding between CENPS and FANCM, leads to synergistic activation of double-stranded DNA binding and strongly stimulates FANCM-mediated DNA remodeling. Recruited by FANCM to the Fanconi anemia (FA) core complex, which consists of CENPS, CENPX, FANCA, FANCB, FANCC, FANCE, FANCF, FANCG, FANCL, FANCM, FAAP24 and FAAP100. The FA core complex associates with Bloom syndrome (BLM) complex, which consists of at least BLM, DNA topoisomerase 3-alpha (TOP3A), RMI1/BLAP75, RPA1/RPA70 and RPA2/RPA32. The super complex between FA and BLM is called BRAFT.

Its subcellular location is the nucleus. The protein resides in the chromosome. It localises to the centromere. It is found in the kinetochore. In terms of biological role, DNA-binding component of the Fanconi anemia (FA) core complex. Required for the normal activation of the FA pathway, leading to monoubiquitination of the FANCI-FANCD2 complex in response to DNA damage, cellular resistance to DNA cross-linking drugs, and prevention of chromosomal breakage. In complex with CENPS (MHF heterodimer), crucial cofactor for FANCM in both binding and ATP-dependent remodeling of DNA. Stabilizes FANCM. In complex with CENPS and FANCM (but not other FANC proteins), rapidly recruited to blocked forks and promotes gene conversion at blocked replication forks. In complex with CENPS, CENPT and CENPW (CENP-T-W-S-X heterotetramer), involved in the formation of a functional kinetochore outer plate, which is essential for kinetochore-microtubule attachment and faithful mitotic progression. As a component of MHF and CENP-T-W-S-X complexes, binds DNA and bends it to form a nucleosome-like structure. DNA-binding function is fulfilled in the presence of CENPS, with the following preference for DNA substates: Holliday junction &gt; double-stranded &gt; splay arm &gt; single-stranded. Does not bind DNA on its own. This chain is Centromere protein X (CENPX), found in Homo sapiens (Human).